The chain runs to 456 residues: Histidine--tRNA ligase (456 aa).

The protein belongs to the class-II aminoacyl-tRNA synthetase family. In terms of assembly, homodimer.

The protein resides in the cytoplasm. It carries out the reaction tRNA(His) + L-histidine + ATP = L-histidyl-tRNA(His) + AMP + diphosphate + H(+). The chain is Histidine--tRNA ligase from Borrelia garinii subsp. bavariensis (strain ATCC BAA-2496 / DSM 23469 / PBi) (Borreliella bavariensis).